An 81-amino-acid polypeptide reads, in one-letter code: Photosystem I iron-sulfur center (81 aa).

2 consecutive 4Fe-4S ferredoxin-type domains span residues 2–31 (SHAV…MVPW) and 39–68 (IASS…IRVY). 8 residues coordinate [4Fe-4S] cluster: Cys-11, Cys-14, Cys-17, Cys-21, Cys-48, Cys-51, Cys-54, and Cys-58.

In terms of assembly, the cyanobacterial PSI reaction center is composed of one copy each of PsaA,B,C,D,E,F,I,J,K,L,M and X, and forms trimeric complexes. The cofactor is [4Fe-4S] cluster.

It localises to the cellular thylakoid membrane. It carries out the reaction reduced [plastocyanin] + hnu + oxidized [2Fe-2S]-[ferredoxin] = oxidized [plastocyanin] + reduced [2Fe-2S]-[ferredoxin]. Apoprotein for the two 4Fe-4S centers FA and FB of photosystem I (PSI); essential for photochemical activity. FB is the terminal electron acceptor of PSI, donating electrons to ferredoxin. The C-terminus interacts with PsaA/B/D and helps assemble the protein into the PSI complex. Required for binding of PsaD and PsaE to PSI. PSI is a plastocyanin/cytochrome c6-ferredoxin oxidoreductase, converting photonic excitation into a charge separation, which transfers an electron from the donor P700 chlorophyll pair to the spectroscopically characterized acceptors A0, A1, FX, FA and FB in turn. In Prochlorococcus marinus (strain MIT 9312), this protein is Photosystem I iron-sulfur center.